A 432-amino-acid polypeptide reads, in one-letter code: Amino-acid acetyltransferase (432 aa).

The N-acetyltransferase domain occupies glutamate 286–serine 425.

The protein belongs to the acetyltransferase family. ArgA subfamily.

Its subcellular location is the cytoplasm. The enzyme catalyses L-glutamate + acetyl-CoA = N-acetyl-L-glutamate + CoA + H(+). The protein operates within amino-acid biosynthesis; L-arginine biosynthesis; N(2)-acetyl-L-ornithine from L-glutamate: step 1/4. The sequence is that of Amino-acid acetyltransferase from Ectopseudomonas mendocina (strain ymp) (Pseudomonas mendocina).